The sequence spans 249 residues: Probable phosphatase Shal_1519 (249 aa).

Residues His8, His10, His16, His41, Glu74, His102, His132, Asp193, and His195 each contribute to the Zn(2+) site.

This sequence belongs to the PHP family. Zn(2+) serves as cofactor.

This is Probable phosphatase Shal_1519 from Shewanella halifaxensis (strain HAW-EB4).